The sequence spans 312 residues: DNA-directed RNA polymerase subunit alpha (312 aa).

Residues 1–226 are alpha N-terminal domain (alpha-NTD); sequence MIEFEKPKIT…DHLNLFVDLS (226 aa). Residues 243–312 are alpha C-terminal domain (alpha-CTD); that stretch reads TERVLDKIIE…ELGLSLKKRK (70 aa).

Belongs to the RNA polymerase alpha chain family. In terms of assembly, homodimer. The RNAP catalytic core consists of 2 alpha, 1 beta, 1 beta' and 1 omega subunit. When a sigma factor is associated with the core the holoenzyme is formed, which can initiate transcription.

The catalysed reaction is RNA(n) + a ribonucleoside 5'-triphosphate = RNA(n+1) + diphosphate. In terms of biological role, DNA-dependent RNA polymerase catalyzes the transcription of DNA into RNA using the four ribonucleoside triphosphates as substrates. The sequence is that of DNA-directed RNA polymerase subunit alpha from Lactococcus lactis subsp. cremoris (strain SK11).